Here is a 144-residue protein sequence, read N- to C-terminus: MINFNFFMNDVVRQAREEIVSAGYTELTTPEAVDEAFKRNGTTLVMVNSVCGCAGGIARPAAAHSVHYDKRPNHLVTVFAGQDKEATARAREYFEGYPPSSPSFALLKDGKIVTMVERHEIEGHEPMQVIAKLQSYFEENCEEL.

Belongs to the bacilliredoxin family.

This Bacillus cereus (strain ATCC 10987 / NRS 248) protein is Bacilliredoxin BCE_4227.